The following is a 63-amino-acid chain: Large ribosomal subunit protein uL30 (63 aa).

The protein belongs to the universal ribosomal protein uL30 family. Part of the 50S ribosomal subunit.

The polypeptide is Large ribosomal subunit protein uL30 (Geobacillus stearothermophilus (Bacillus stearothermophilus)).